The following is a 208-amino-acid chain: Small ribosomal subunit protein uS4 (208 aa).

Positions 96 to 159 (SRLDNIVYRL…KKNEKVLEAL (64 aa)) constitute an S4 RNA-binding domain.

The protein belongs to the universal ribosomal protein uS4 family. As to quaternary structure, part of the 30S ribosomal subunit. Contacts protein S5. The interaction surface between S4 and S5 is involved in control of translational fidelity.

Functionally, one of the primary rRNA binding proteins, it binds directly to 16S rRNA where it nucleates assembly of the body of the 30S subunit. Its function is as follows. With S5 and S12 plays an important role in translational accuracy. The chain is Small ribosomal subunit protein uS4 from Mycoplasma capricolum subsp. capricolum (strain California kid / ATCC 27343 / NCTC 10154).